The chain runs to 619 residues: Dihydroxy-acid dehydratase (619 aa).

Residue aspartate 81 coordinates Mg(2+). Cysteine 122 is a [2Fe-2S] cluster binding site. Residues aspartate 123 and lysine 124 each coordinate Mg(2+). An N6-carboxylysine modification is found at lysine 124. A [2Fe-2S] cluster-binding site is contributed by cysteine 195. Residue glutamate 494 coordinates Mg(2+). Residue serine 520 is the Proton acceptor of the active site.

The protein belongs to the IlvD/Edd family. In terms of assembly, homodimer. Requires [2Fe-2S] cluster as cofactor. It depends on Mg(2+) as a cofactor.

The catalysed reaction is (2R)-2,3-dihydroxy-3-methylbutanoate = 3-methyl-2-oxobutanoate + H2O. The enzyme catalyses (2R,3R)-2,3-dihydroxy-3-methylpentanoate = (S)-3-methyl-2-oxopentanoate + H2O. The protein operates within amino-acid biosynthesis; L-isoleucine biosynthesis; L-isoleucine from 2-oxobutanoate: step 3/4. Its pathway is amino-acid biosynthesis; L-valine biosynthesis; L-valine from pyruvate: step 3/4. Functions in the biosynthesis of branched-chain amino acids. Catalyzes the dehydration of (2R,3R)-2,3-dihydroxy-3-methylpentanoate (2,3-dihydroxy-3-methylvalerate) into 2-oxo-3-methylpentanoate (2-oxo-3-methylvalerate) and of (2R)-2,3-dihydroxy-3-methylbutanoate (2,3-dihydroxyisovalerate) into 2-oxo-3-methylbutanoate (2-oxoisovalerate), the penultimate precursor to L-isoleucine and L-valine, respectively. The protein is Dihydroxy-acid dehydratase of Shewanella frigidimarina (strain NCIMB 400).